A 257-amino-acid polypeptide reads, in one-letter code: MADS-box transcription factor 1 (257 aa).

The region spanning 1 to 61 (MGRGKVELKR…GRLFEFSSSS (61 aa)) is the MADS-box domain. Residues 85–175 (NEINYQEYLK…RKKLQETSAE (91 aa)) form the K-box domain.

As to quaternary structure, may interact with the K-box of MADS6, MADS14 and MADS15.

The protein resides in the nucleus. Its function is as follows. Probable transcription factor involved in the development of floral organs. Required for the formation of inner floral organs (lodicules, stamens and carpels, or whorls 2, 3 and 4) and the lemma and palea (whorl 1), which are grass floral organs analogous to sepals. May be involved in the control of flowering time. Seems to act as transcriptional activator. May act upstream of the auxin-responsive protein GH3.8. This is MADS-box transcription factor 1 (MADS1) from Oryza sativa subsp. indica (Rice).